Here is a 917-residue protein sequence, read N- to C-terminus: PAX3- and PAX7-binding protein 1 (917 aa).

The segment covering 1–11 has biased composition (basic residues); sequence MFRKARRVNVR. Disordered stretches follow at residues 1-123, 143-205, and 229-275; these read MFRK…FKVK, LEKS…GAFS, and RKKR…RIVF. S16 is modified (phosphoserine). Residues 16–28 are compositionally biased toward acidic residues; it reads SEEEERERDEEQE. Gly residues-rich tracts occupy residues 40 to 50 and 73 to 85; these read EEAGPGGGDRA and AEAGGGFPGGAEP. K149 is covalently cross-linked (Glycyl lysine isopeptide (Lys-Gly) (interchain with G-Cter in SUMO1); alternate). K149 is covalently cross-linked (Glycyl lysine isopeptide (Lys-Gly) (interchain with G-Cter in SUMO2); alternate). A phosphoserine mark is found at S154, S155, and S158. The segment covering 161 to 172 has biased composition (basic and acidic residues); it reads PLDKTGHVKDTN. The segment covering 183-193 has biased composition (acidic residues); that stretch reads GEDEMDMESEK. Residue S191 is modified to Phosphoserine. Basic and acidic residues predominate over residues 234–256; sequence MARELGDFTPHDNEPGKGRLVRE. Positions 257–268 are enriched in acidic residues; that stretch reads DENDASDDEDDD. Residues S262 and S295 each carry the phosphoserine modification. Disordered stretches follow at residues 362 to 381 and 530 to 564; these read SSDAKSQKTDNTVPFKTPSN and AEREARRTRRRQAREQTGKMADHLEGLSSDDEETS. Residues 378-558 are necessary and sufficient for interaction with PAX7; it reads TPSNEMTPVT…MADHLEGLSS (181 aa). Positions 542 to 554 are enriched in basic and acidic residues; the sequence is AREQTGKMADHLE. A phosphoserine mark is found at S557 and S558. T563 carries the post-translational modification Phosphothreonine.

The protein belongs to the GCF family. In terms of assembly, interacts with PAX3 and PAX7. Interacts with WDR5; associates with a histone methyltransferase (HMT) complex composed at least of RBBP5, ASH2L, SET1, SET2 and KMT2A/MLL1, KMT2D/MLL2, KMT2C/MLL3 and KMT2B/MLL4 through direct interaction with WDR5. As to expression, ubiquitous.

Its subcellular location is the nucleus. Its function is as follows. Adapter protein linking the transcription factors PAX3 and PAX7 to the histone methylation machinery and involved in myogenesis. Associates with a histone methyltransferase complex that specifically mediates dimethylation and trimethylation of 'Lys-4' of histone H3. Mediates the recruitment of that complex to the transcription factors PAX3 and PAX7 on chromatin to regulate the expression of genes involved in muscle progenitor cells proliferation including ID3 and CDC20. The polypeptide is PAX3- and PAX7-binding protein 1 (PAXBP1) (Homo sapiens (Human)).